Consider the following 341-residue polypeptide: DNA-directed RNA polymerase subunit alpha (341 aa).

The segment at 1–233 is alpha N-terminal domain (alpha-NTD); the sequence is MLKDGTSVSN…DLLSPFLHTK (233 aa). Residues 262–341 are alpha C-terminal domain (alpha-CTD); it reads SEGDFFKNTF…NEKPRVVGDE (80 aa).

Belongs to the RNA polymerase alpha chain family. In terms of assembly, in plastids the minimal PEP RNA polymerase catalytic core is composed of four subunits: alpha, beta, beta', and beta''. When a (nuclear-encoded) sigma factor is associated with the core the holoenzyme is formed, which can initiate transcription.

It localises to the plastid. Its subcellular location is the chloroplast. The catalysed reaction is RNA(n) + a ribonucleoside 5'-triphosphate = RNA(n+1) + diphosphate. Its function is as follows. DNA-dependent RNA polymerase catalyzes the transcription of DNA into RNA using the four ribonucleoside triphosphates as substrates. The chain is DNA-directed RNA polymerase subunit alpha from Marsilea quadrifolia (European water clover).